The chain runs to 154 residues: Myoglobin (154 aa).

The region spanning 2–148 (GLSDDEWHHV…FRNDMASKYK (147 aa)) is the Globin domain. His-65 is a nitrite binding site. His-65 contributes to the O2 binding site. Position 94 (His-94) interacts with heme b.

This sequence belongs to the globin family. Monomeric.

Its subcellular location is the cytoplasm. It is found in the sarcoplasm. It carries out the reaction Fe(III)-heme b-[protein] + nitric oxide + H2O = Fe(II)-heme b-[protein] + nitrite + 2 H(+). The catalysed reaction is H2O2 + AH2 = A + 2 H2O. In terms of biological role, monomeric heme protein which primary function is to store oxygen and facilitate its diffusion within muscle tissues. Reversibly binds oxygen through a pentacoordinated heme iron and enables its timely and efficient release as needed during periods of heightened demand. Depending on the oxidative conditions of tissues and cells, and in addition to its ability to bind oxygen, it also has a nitrite reductase activity whereby it regulates the production of bioactive nitric oxide. Under stress conditions, like hypoxia and anoxia, it also protects cells against reactive oxygen species thanks to its pseudoperoxidase activity. The sequence is that of Myoglobin (MB) from Graptemys geographica (Common map turtle).